The following is a 197-amino-acid chain: Holliday junction branch migration complex subunit RuvA (197 aa).

The domain I stretch occupies residues 1–63 (MINKIHGKVI…ENELKLFGFL (63 aa)). Residues 64–139 (NSDEREIFKE…KLLINSELES (76 aa)) are domain II. A region of interest (flexible linker) is located at residue serine 139. A domain III region spans residues 140–197 (TGLFRFKELEESIVSMGFDRKIVNSKIREAFNLAEFANLKDSEKEQFLFKEVLKRISN).

This sequence belongs to the RuvA family. Homotetramer. Forms an RuvA(8)-RuvB(12)-Holliday junction (HJ) complex. HJ DNA is sandwiched between 2 RuvA tetramers; dsDNA enters through RuvA and exits via RuvB. An RuvB hexamer assembles on each DNA strand where it exits the tetramer. Each RuvB hexamer is contacted by two RuvA subunits (via domain III) on 2 adjacent RuvB subunits; this complex drives branch migration. In the full resolvosome a probable DNA-RuvA(4)-RuvB(12)-RuvC(2) complex forms which resolves the HJ.

The protein resides in the cytoplasm. In terms of biological role, the RuvA-RuvB-RuvC complex processes Holliday junction (HJ) DNA during genetic recombination and DNA repair, while the RuvA-RuvB complex plays an important role in the rescue of blocked DNA replication forks via replication fork reversal (RFR). RuvA specifically binds to HJ cruciform DNA, conferring on it an open structure. The RuvB hexamer acts as an ATP-dependent pump, pulling dsDNA into and through the RuvAB complex. HJ branch migration allows RuvC to scan DNA until it finds its consensus sequence, where it cleaves and resolves the cruciform DNA. The chain is Holliday junction branch migration complex subunit RuvA from Borreliella burgdorferi (strain ATCC 35210 / DSM 4680 / CIP 102532 / B31) (Borrelia burgdorferi).